The primary structure comprises 224 residues: COMM domain-containing protein 5 (224 aa).

N-acetylserine is present on serine 2. Positions 151–215 (HVADFRWRVD…LVLKEMADLE (65 aa)) constitute a COMM domain.

This sequence belongs to the COMM domain-containing protein 5 family. As to quaternary structure, component of the commander complex consisting of the CCC subcomplex and the retriever subcomplex. Component of the CCC (COMMD/CCDC22/CCDC93) subcomplex consisting of COMMD1, COMMD2, COMMD3, COMMD4, COMMD5, COMMD6, COMMD7, COMMD8, COMMD9, COMMD10, CCDC22 and CCDC93; within the complex forms a heterodimer with COMMD10. Interacts (via COMM domain) with COMMD1 (via COMM domain). Interacts with RELA, RELB, NFKB1/p105. Interacts with CCDC22, CCDC93, SCNN1B, CUL2, CUL3, CUL4A, CUL4B, CUL7. As to expression, highly expressed in heart, stomach, jejunum, kidney, liver, and adrenal gland. Expression was generally higher in adult organs than in fetal tissues, particularly in heart, kidney, and liver.

It localises to the cytoplasm. It is found in the nucleus. Scaffold protein in the commander complex that is essential for endosomal recycling of transmembrane cargos; the commander complex is composed of the CCC subcomplex and the retriever subcomplex. May modulate activity of cullin-RING E3 ubiquitin ligase (CRL) complexes. Negatively regulates cell proliferation. Negatively regulates cell cycle G2/M phase transition probably by transactivating p21/CDKN1A through the p53/TP53-independent signaling pathway. Involved in kidney proximal tubule morphogenesis. Down-regulates activation of NF-kappa-B. The sequence is that of COMM domain-containing protein 5 (COMMD5) from Homo sapiens (Human).